A 312-amino-acid chain; its full sequence is MFWQRKDLLGLRYLTPEEINLILDTAVPMKEIIGRKIKKTPTLRGRSMVTLFYENSTRTRSSFDLAGKFLSADTVGLTASSSSVAKGESLRDTGLTLTAMGVDVVVMRHPASGAAEYLAKCIPAAVINAGDGTHEHPTQALLDMFTIREKKGSMAGLKVVIVGDILHSRVARSNIWGLTKMGAEVRVVGPITLMPKDIEKMGVKVYHRLEDALEGADVVNVLRIQLERQQQGLFPSLREYSRLYGINQKRLELTASDAIILHPGPMNRGVEIEHQVAYGNRSFINEQVTNGVAVRMALLYLLTGGEYHALSN.

Carbamoyl phosphate-binding residues include Arg58 and Thr59. Residue Lys86 coordinates L-aspartate. The carbamoyl phosphate site is built by Arg108, His136, and Gln139. 2 residues coordinate L-aspartate: Arg169 and Arg223. Carbamoyl phosphate-binding residues include Gly264 and Pro265.

This sequence belongs to the aspartate/ornithine carbamoyltransferase superfamily. ATCase family. In terms of assembly, heterododecamer (2C3:3R2) of six catalytic PyrB chains organized as two trimers (C3), and six regulatory PyrI chains organized as three dimers (R2).

The enzyme catalyses carbamoyl phosphate + L-aspartate = N-carbamoyl-L-aspartate + phosphate + H(+). It functions in the pathway pyrimidine metabolism; UMP biosynthesis via de novo pathway; (S)-dihydroorotate from bicarbonate: step 2/3. Its function is as follows. Catalyzes the condensation of carbamoyl phosphate and aspartate to form carbamoyl aspartate and inorganic phosphate, the committed step in the de novo pyrimidine nucleotide biosynthesis pathway. The sequence is that of Aspartate carbamoyltransferase catalytic subunit from Desulforamulus reducens (strain ATCC BAA-1160 / DSM 100696 / MI-1) (Desulfotomaculum reducens).